We begin with the raw amino-acid sequence, 191 residues long: 7-methyl-GTP pyrophosphatase (191 aa).

Aspartate 70 (proton acceptor) is an active-site residue.

It belongs to the Maf family. YceF subfamily. A divalent metal cation is required as a cofactor.

The protein localises to the cytoplasm. The catalysed reaction is N(7)-methyl-GTP + H2O = N(7)-methyl-GMP + diphosphate + H(+). In terms of biological role, nucleoside triphosphate pyrophosphatase that hydrolyzes 7-methyl-GTP (m(7)GTP). May have a dual role in cell division arrest and in preventing the incorporation of modified nucleotides into cellular nucleic acids. In Xanthomonas oryzae pv. oryzae (strain KACC10331 / KXO85), this protein is 7-methyl-GTP pyrophosphatase.